A 300-amino-acid polypeptide reads, in one-letter code: Pantoate kinase (300 aa).

It belongs to the GHMP kinase family. PoK subfamily. As to quaternary structure, homodimer.

The enzyme catalyses (R)-pantoate + ATP = (R)-4-phosphopantoate + ADP + H(+). The protein operates within cofactor biosynthesis; coenzyme A biosynthesis. Moderately stimulated in the presence of potassium cations. Inhibited by increasing concentrations of pantoate. Activity is not affected by CoA/acetyl-CoA. Functionally, phosphorylates (R)-pantoate to form (R)-4-phosphopantoate in the CoA biosynthesis pathway. Displays broad nucleotide specificity and utilizes ATP, GTP, UTP, and CTP with comparable catalytic efficiencies. This chain is Pantoate kinase, found in Thermococcus kodakarensis (strain ATCC BAA-918 / JCM 12380 / KOD1) (Pyrococcus kodakaraensis (strain KOD1)).